Reading from the N-terminus, the 343-residue chain is Biotin synthase (343 aa).

The Radical SAM core domain maps to 36-254; the sequence is NTIQISTLLS…IAVARIMMPK (219 aa). [4Fe-4S] cluster is bound by residues Cys-51, Cys-55, and Cys-58. The [2Fe-2S] cluster site is built by Cys-95, Cys-126, Cys-186, and Arg-258.

It belongs to the radical SAM superfamily. Biotin synthase family. In terms of assembly, homodimer. It depends on [4Fe-4S] cluster as a cofactor. Requires [2Fe-2S] cluster as cofactor.

The enzyme catalyses (4R,5S)-dethiobiotin + (sulfur carrier)-SH + 2 reduced [2Fe-2S]-[ferredoxin] + 2 S-adenosyl-L-methionine = (sulfur carrier)-H + biotin + 2 5'-deoxyadenosine + 2 L-methionine + 2 oxidized [2Fe-2S]-[ferredoxin]. It participates in cofactor biosynthesis; biotin biosynthesis; biotin from 7,8-diaminononanoate: step 2/2. Its function is as follows. Catalyzes the conversion of dethiobiotin (DTB) to biotin by the insertion of a sulfur atom into dethiobiotin via a radical-based mechanism. The polypeptide is Biotin synthase (Buchnera aphidicola subsp. Acyrthosiphon pisum (strain 5A)).